A 107-amino-acid chain; its full sequence is Ig kappa chain V-VI region TEPC 601/TEPC 191 (107 aa).

Residues 1 to 23 (EIVLTQSPAITAASLGQKVTITC) are framework-1. Cys-23 and Cys-87 are joined by a disulfide. Residues 24 to 33 (SASSSVSYMH) are complementarity-determining-1. Positions 34–48 (WYQQKSGTSPKPWIY) are framework-2. Positions 49-55 (EISKLAS) are complementarity-determining-2. A framework-3 region spans residues 56–87 (GVPARFSGSGSGTSYSLTISSMEAEDAAIYYC). The complementarity-determining-3 stretch occupies residues 88-96 (QQWNYPLIT). Residues 97 to 106 (FGAGTKLELK) form a framework-4 region.

The protein is Ig kappa chain V-VI region TEPC 601/TEPC 191 of Mus musculus (Mouse).